Consider the following 181-residue polypeptide: Large ribosomal subunit protein uL6 (181 aa).

It belongs to the universal ribosomal protein uL6 family. As to quaternary structure, part of the 50S ribosomal subunit.

Functionally, this protein binds to the 23S rRNA, and is important in its secondary structure. It is located near the subunit interface in the base of the L7/L12 stalk, and near the tRNA binding site of the peptidyltransferase center. This Synechococcus sp. (strain JA-2-3B'a(2-13)) (Cyanobacteria bacterium Yellowstone B-Prime) protein is Large ribosomal subunit protein uL6.